A 537-amino-acid polypeptide reads, in one-letter code: CTP synthase (537 aa).

The tract at residues 1–269 (MNQTKYIFVT…DKVALKKLDL (269 aa)) is amidoligase domain. CTP is bound at residue S15. S15 is a UTP binding site. 16–21 (SLGKGI) provides a ligand contact to ATP. Y56 lines the L-glutamine pocket. Position 73 (D73) interacts with ATP. Residues D73 and E143 each contribute to the Mg(2+) site. Residues 150 to 152 (DIE), 190 to 195 (KTKPTQ), and K226 contribute to the CTP site. UTP is bound by residues 190–195 (KTKPTQ) and K226. Residues 295–537 (SIGLVGKYVE…IAAAVKHKNK (243 aa)) enclose the Glutamine amidotransferase type-1 domain. G357 is a binding site for L-glutamine. The active-site Nucleophile; for glutamine hydrolysis is C384. Residues 385–388 (LGMQ), E408, and R465 contribute to the L-glutamine site. Catalysis depends on residues H510 and E512.

It belongs to the CTP synthase family. In terms of assembly, homotetramer.

The enzyme catalyses UTP + L-glutamine + ATP + H2O = CTP + L-glutamate + ADP + phosphate + 2 H(+). It carries out the reaction L-glutamine + H2O = L-glutamate + NH4(+). It catalyses the reaction UTP + NH4(+) + ATP = CTP + ADP + phosphate + 2 H(+). Its pathway is pyrimidine metabolism; CTP biosynthesis via de novo pathway; CTP from UDP: step 2/2. Its activity is regulated as follows. Allosterically activated by GTP, when glutamine is the substrate; GTP has no effect on the reaction when ammonia is the substrate. The allosteric effector GTP functions by stabilizing the protein conformation that binds the tetrahedral intermediate(s) formed during glutamine hydrolysis. Inhibited by the product CTP, via allosteric rather than competitive inhibition. Its function is as follows. Catalyzes the ATP-dependent amination of UTP to CTP with either L-glutamine or ammonia as the source of nitrogen. Regulates intracellular CTP levels through interactions with the four ribonucleotide triphosphates. The chain is CTP synthase from Flavobacterium psychrophilum (strain ATCC 49511 / DSM 21280 / CIP 103535 / JIP02/86).